A 514-amino-acid chain; its full sequence is Peptide chain release factor 3 (514 aa).

In terms of domain architecture, tr-type G spans 8-268 (KKRRTFAIIS…TFLEFAPEPH (261 aa)). Residues 17–24 (SHPDAGKT), 85–89 (DTPGH), and 139–142 (NKLD) each bind GTP.

This sequence belongs to the TRAFAC class translation factor GTPase superfamily. Classic translation factor GTPase family. PrfC subfamily.

It is found in the cytoplasm. Functionally, increases the formation of ribosomal termination complexes and stimulates activities of RF-1 and RF-2. It binds guanine nucleotides and has strong preference for UGA stop codons. It may interact directly with the ribosome. The stimulation of RF-1 and RF-2 is significantly reduced by GTP and GDP, but not by GMP. The sequence is that of Peptide chain release factor 3 from Streptococcus pyogenes serotype M18 (strain MGAS8232).